The sequence spans 146 residues: Hemoglobin subunit beta (146 aa).

The Globin domain maps to 2–146 (QWSDSERTII…VVMFLGKQYH (145 aa)). 2 residues coordinate heme b: histidine 63 and histidine 92.

This sequence belongs to the globin family. As to quaternary structure, heterotetramer of two alpha chains and two beta chains. As to expression, red blood cells.

Functionally, involved in oxygen transport from the lung to the various peripheral tissues. This Artedidraco orianae (Barbeled plunderfish) protein is Hemoglobin subunit beta (hbb).